A 338-amino-acid chain; its full sequence is MQVYYDKDCDLSIIQGKKVAILGFGSQGHAHACNLKDSGVDVVVGLRAGSSSIAKAEAYGLKTSDVASAVASADVVMVLTPDEFQAQLYREEIEPNLKQGATLAFAHGFAIHYNQIVPRKDLDVIMVAPKAPGHTVRTEFTKGGGIPDLIAIFQDASGNAKNVALSYASGIGGGRTGIIETTFKDETETDLFGEQAVLCGGAVELVKAGFETLTEAGYAPEMAYFECLHELKLIVDLMYEGGIANMNYSISNNAEYGEYVTGPEVINEQSREAMRNALKRIQSGEYAKMFISEGALNYPSMTARRRQNAAHEIETVGEKLRSMMPWISANKIVDKDKN.

The KARI N-terminal Rossmann domain maps to 1-181; that stretch reads MQVYYDKDCD…GGGRTGIIET (181 aa). NADP(+) contacts are provided by residues 24-27, R47, S50, S52, and 82-85; these read FGSQ and DEFQ. The active site involves H107. G133 contacts NADP(+). The region spanning 182–327 is the KARI C-terminal knotted domain; the sequence is TFKDETETDL…EKLRSMMPWI (146 aa). Positions 190, 194, 226, and 230 each coordinate Mg(2+). Residue S251 participates in substrate binding.

This sequence belongs to the ketol-acid reductoisomerase family. Mg(2+) is required as a cofactor.

The catalysed reaction is (2R)-2,3-dihydroxy-3-methylbutanoate + NADP(+) = (2S)-2-acetolactate + NADPH + H(+). It carries out the reaction (2R,3R)-2,3-dihydroxy-3-methylpentanoate + NADP(+) = (S)-2-ethyl-2-hydroxy-3-oxobutanoate + NADPH + H(+). The protein operates within amino-acid biosynthesis; L-isoleucine biosynthesis; L-isoleucine from 2-oxobutanoate: step 2/4. Its pathway is amino-acid biosynthesis; L-valine biosynthesis; L-valine from pyruvate: step 2/4. In terms of biological role, involved in the biosynthesis of branched-chain amino acids (BCAA). Catalyzes an alkyl-migration followed by a ketol-acid reduction of (S)-2-acetolactate (S2AL) to yield (R)-2,3-dihydroxy-isovalerate. In the isomerase reaction, S2AL is rearranged via a Mg-dependent methyl migration to produce 3-hydroxy-3-methyl-2-ketobutyrate (HMKB). In the reductase reaction, this 2-ketoacid undergoes a metal-dependent reduction by NADPH to yield (R)-2,3-dihydroxy-isovalerate. In Marinobacter nauticus (strain ATCC 700491 / DSM 11845 / VT8) (Marinobacter aquaeolei), this protein is Ketol-acid reductoisomerase (NADP(+)).